Consider the following 558-residue polypeptide: Ribonuclease J (558 aa).

His-81, His-83, Asp-85, His-86, His-148, and Asp-170 together coordinate Zn(2+). A substrate-binding site is contributed by 371–375 (HVSGH). His-397 contacts Zn(2+).

The protein belongs to the metallo-beta-lactamase superfamily. RNA-metabolizing metallo-beta-lactamase-like family. Bacterial RNase J subfamily. In terms of assembly, homodimer. It depends on Zn(2+) as a cofactor.

It localises to the cytoplasm. An RNase that has endonuclease and 5'-3' exonuclease activity. The 5'-exonuclease activity acts on 5'-monophosphate but not 5'-triphosphate ends. Endonuclease activity can cleave within 4 nucleotides of the 5'-end of a triphosphorylated RNA. Plays the major role in pre-23S rRNA maturation, and a minor role in processing of pre-5S and pre-16S rRNA. This Mycolicibacterium smegmatis (strain ATCC 700084 / mc(2)155) (Mycobacterium smegmatis) protein is Ribonuclease J.